We begin with the raw amino-acid sequence, 166 residues long: MSDRIGLFAGSFDPVTNGHVDIIRRASGLFDKLYVGLFYNKDKTGLFEPARRQIMLKEALGDLKNVEVVAARDSLAVDIARQHQVTHLVRGLRNAQDLEYEANLAFFNSQLAKEIETVFLLTALDYRYFSSSRIRELIHFGADISPYVPQGVVKEVGKKCENKQKI.

Position 11 (Ser-11) interacts with substrate. Residues 11 to 12 and His-19 each bind ATP; that span reads SF. Lys-43, Ala-76, and Arg-90 together coordinate substrate. ATP contacts are provided by residues 91 to 93, Glu-101, and 126 to 132; these read GLR and YRYFSSS.

This sequence belongs to the bacterial CoaD family. As to quaternary structure, homohexamer. Mg(2+) serves as cofactor.

The protein resides in the cytoplasm. It catalyses the reaction (R)-4'-phosphopantetheine + ATP + H(+) = 3'-dephospho-CoA + diphosphate. The protein operates within cofactor biosynthesis; coenzyme A biosynthesis; CoA from (R)-pantothenate: step 4/5. Reversibly transfers an adenylyl group from ATP to 4'-phosphopantetheine, yielding dephospho-CoA (dPCoA) and pyrophosphate. This chain is Phosphopantetheine adenylyltransferase, found in Streptococcus mutans serotype c (strain ATCC 700610 / UA159).